A 209-amino-acid chain; its full sequence is Ubiquitin-conjugating enzyme E2 S (209 aa).

Positions 14-160 (QTIRQVMREL…ARMMTEIHAQ (147 aa)) constitute a UBC core domain. C98 functions as the Glycyl thioester intermediate in the catalytic mechanism. The segment at 164-209 (CGVGASGDAKDDDGPSTKKHAGLDKKLQDKKKEKLLKEKKRMLKRL) is disordered. A compositionally biased stretch (basic and acidic residues) spans 171 to 199 (DAKDDDGPSTKKHAGLDKKLQDKKKEKLL). Positions 200–209 (KEKKRMLKRL) are enriched in basic residues.

This sequence belongs to the ubiquitin-conjugating enzyme family.

The catalysed reaction is S-ubiquitinyl-[E1 ubiquitin-activating enzyme]-L-cysteine + [E2 ubiquitin-conjugating enzyme]-L-cysteine = [E1 ubiquitin-activating enzyme]-L-cysteine + S-ubiquitinyl-[E2 ubiquitin-conjugating enzyme]-L-cysteine.. It functions in the pathway protein modification; protein ubiquitination. In terms of biological role, catalyzes the covalent attachment of ubiquitin to other proteins. Acts as an essential factor of the anaphase promoting complex/cyclosome (APC/C), a cell cycle-regulated ubiquitin ligase that controls progression through mitosis. Acts by specifically elongating polyubiquitin chains initiated by the E2 enzyme vih/UbcH10 on APC/C substrates, enhancing the degradation of APC/C substrates by the proteasome and promoting mitotic exit. In Drosophila yakuba (Fruit fly), this protein is Ubiquitin-conjugating enzyme E2 S.